The sequence spans 194 residues: Ion-translocating oxidoreductase complex subunit A (194 aa).

6 consecutive transmembrane segments (helical) span residues 4–24 (LALILVSAILVNNFVLVQFLG), 39–59 (IGLSLATTFVLTLAAICSYIL), 71–91 (FLRTIGFILVIAVVVQFTEML), 102–122 (VLGIFLPLITTNCIVLGVALL), 135–155 (TTQGFGAGLGFSLVLVLFAAL), and 172–192 (AIGMITAGLMSLAFMGFSGLI).

This sequence belongs to the NqrDE/RnfAE family. The complex is composed of six subunits: RnfA, RnfB, RnfC, RnfD, RnfE and RnfG.

It is found in the cell inner membrane. In terms of biological role, part of a membrane-bound complex that couples electron transfer with translocation of ions across the membrane. The polypeptide is Ion-translocating oxidoreductase complex subunit A (Pseudomonas paraeruginosa (strain DSM 24068 / PA7) (Pseudomonas aeruginosa (strain PA7))).